A 213-amino-acid chain; its full sequence is 3-isopropylmalate dehydratase small subunit (213 aa).

This sequence belongs to the LeuD family. LeuD type 1 subfamily. In terms of assembly, heterodimer of LeuC and LeuD.

It catalyses the reaction (2R,3S)-3-isopropylmalate = (2S)-2-isopropylmalate. The protein operates within amino-acid biosynthesis; L-leucine biosynthesis; L-leucine from 3-methyl-2-oxobutanoate: step 2/4. Catalyzes the isomerization between 2-isopropylmalate and 3-isopropylmalate, via the formation of 2-isopropylmaleate. The protein is 3-isopropylmalate dehydratase small subunit of Neisseria meningitidis serogroup C (strain 053442).